The chain runs to 285 residues: Phosphatase YwpJ (285 aa).

The active-site Nucleophile is Asp7. Position 7 (Asp7) interacts with Mg(2+). Phosphate is bound at residue Leu8. Asp9 lines the Mg(2+) pocket. Residues 41–42 (TG) and Lys214 contribute to the phosphate site. Residues Asp237 and Ser238 each coordinate Mg(2+). Residues Asn240 and 282 to 283 (KH) contribute to the phosphate site.

The protein belongs to the HAD-like hydrolase superfamily. Cof family. The cofactor is Mg(2+).

In terms of biological role, catalyzes the dephosphorylation of phosphorylated 5-6 carbon sugars and monophosphate nucleotides (NMP) in vitro. To a lesser extent, dephosphorylates flavin mononucleotide (FMN) in vitro. The protein is Phosphatase YwpJ (ywpJ) of Bacillus subtilis (strain 168).